The primary structure comprises 343 residues: MAPMRKKSTLKLLTLLVLFIFLTSFFLNYSHTVVTTAWFPKQMVIELSENFKKLMKYPYRPCTCTRCIEEQRVSAWFDERFNRSMQPLLTAKNAHLEEDTYKWWLRLQREKQPNNLNDTIRELFQVVPGNVDPLLEKRLVSCRRCAVVGNSGNLKESYYGPQIDSHDFVLRMNKAPTEGFEADVGSKTTHHFVYPESFRELAQEVSMILVPFKTTDLEWVISATTTGRISHTYVPVPAKIKVKKEKILIYHPAFIKYVFDRWLQGHGRYPSTGILSVIFSLHICDEVDLYGFGADSKGNWHHYWENNPSAGAFRKTGVHDGDFESNVTTILASINKIRIFKGR.

The Cytoplasmic segment spans residues 1 to 11 (MAPMRKKSTLK). A helical; Signal-anchor for type II membrane protein membrane pass occupies residues 12 to 27 (LLTLLVLFIFLTSFFL). Residue Asn-28 is glycosylated (N-linked (GlcNAc...) asparagine). At 28-343 (NYSHTVVTTA…INKIRIFKGR (316 aa)) the chain is on the lumenal side. Intrachain disulfides connect Cys-62–Cys-67, Cys-64–Cys-142, and Cys-145–Cys-284. Asn-82 is a glycosylation site (N-linked (GlcNAc...) asparagine). Gln-108 provides a ligand contact to substrate. N-linked (GlcNAc...) asparagine glycosylation occurs at Asn-117. The substrate site is built by Asn-150, Asn-173, Tyr-233, Tyr-269, Gly-273, Gly-293, His-302, and His-319. The N-linked (GlcNAc...) asparagine glycan is linked to Asn-326.

This sequence belongs to the glycosyltransferase 29 family. The soluble form derives from the membrane form by proteolytic processing. The long isoform is abundant in salivary gland, liver, lung, and colon mucosa. Both long and short forms are detected in submaxillary salivary glands.

It is found in the golgi apparatus. The protein localises to the golgi stack membrane. It localises to the trans-Golgi network membrane. Its subcellular location is the secreted. It carries out the reaction a beta-D-galactosyl-(1-&gt;3)-N-acetyl-alpha-D-galactosaminyl derivative + CMP-N-acetyl-beta-neuraminate = an N-acetyl-alpha-neuraminyl-(2-&gt;3)-beta-D-galactosyl-(1-&gt;3)-N-acetyl-alpha-D-galactosaminyl derivative + CMP + H(+). The enzyme catalyses a ganglioside GM1 (d18:1(4E)) + CMP-N-acetyl-beta-neuraminate = a ganglioside GD1a (d18:1(4E)) + CMP + H(+). The catalysed reaction is ganglioside GM1 (d18:1(4E)/18:0) + CMP-N-acetyl-beta-neuraminate = ganglioside GD1a (18:1(4E)/18:0) + CMP + H(+). It catalyses the reaction a ganglioside GA1 (d18:1(4E)) + CMP-N-acetyl-beta-neuraminate = a ganglioside GM1b (d18:1(4E)) + CMP + H(+). It carries out the reaction a ganglioside GD1b + CMP-N-acetyl-beta-neuraminate = a ganglioside GT1b + CMP + H(+). The enzyme catalyses a 3-O-[beta-D-galactosyl-(1-&gt;3)-N-acetyl-alpha-D-galactosaminyl]-L-threonyl-[protein] + CMP-N-acetyl-beta-neuraminate = a 3-O-[N-acetyl-alpha-neuraminyl-(2-&gt;3)-beta-D-galactosyl-(1-&gt;3)-N-acetyl-alpha-D-galactosaminyl]-L-threonyl-[protein] + CMP + H(+). The catalysed reaction is a 3-O-[beta-D-galactosyl-(1-&gt;3)-N-acetyl-alpha-D-galactosaminyl]-L-seryl-[protein] + CMP-N-acetyl-beta-neuraminate = 3-O-[N-acetyl-alpha-neuraminyl-(2-&gt;3)-beta-D-galactosyl-(1-&gt;3)-N-acetyl-alpha-D-galactosaminyl]-L-seryl-[protein] + CMP + H(+). The protein operates within protein modification; protein glycosylation. It functions in the pathway glycolipid biosynthesis. In terms of biological role, a beta-galactoside alpha2-&gt;3 sialyltransferase involved in terminal sialylation of glycoproteins and glycolipids. Catalyzes the transfer of sialic acid (N-acetyl-neuraminic acid; Neu5Ac) from the nucleotide sugar donor CMP-Neu5Ac onto acceptor Galbeta-(1-&gt;3)-GalNAc-terminated glycoconjugates through an alpha2-3 linkage. Adds sialic acid to the core 1 O-glycan, Galbeta-(1-&gt;3)-GalNAc-O-Ser/Thr, which is a major structure of mucin-type O-glycans. As part of a homeostatic mechanism that regulates CD8-positive T cell numbers, sialylates core 1 O-glycans of T cell glycoproteins, SPN/CD43 and PTPRC/CD45. Prevents premature apoptosis of thymic CD8-positive T cells prior to peripheral emigration, whereas in the secondary lymphoid organs controls the survival of CD8-positive memory T cells generated following a successful immune response. Transfers sialic acid to asialofetuin, presumably onto Galbeta-(1-&gt;3)-GalNAc-O-Ser. Sialylates GM1a, GA1 and GD1b gangliosides to form GD1a, GM1b and GT1b, respectively. The sequence is that of CMP-N-acetylneuraminate-beta-galactosamide-alpha-2,3-sialyltransferase 1 (ST3GAL1) from Sus scrofa (Pig).